An 81-amino-acid polypeptide reads, in one-letter code: Omega-conotoxin-like TxMKLT1-0223 (81 aa).

The first 22 residues, 1-22, serve as a signal peptide directing secretion; it reads MKLTCMMIVAVLFLTAWTFVTA. Positions 23-52 are excised as a propeptide; the sequence is VPHSSNALENLYLKARHEMENPEASKLNTR. Cystine bridges form between Cys55-Cys72, Cys62-Cys76, and Cys71-Cys80.

Belongs to the conotoxin O1 superfamily. In terms of tissue distribution, expressed by the venom duct.

It localises to the secreted. Omega-conotoxins act at presynaptic membranes, they bind and block voltage-gated calcium channels (Cav). This is Omega-conotoxin-like TxMKLT1-0223 from Conus textile (Cloth-of-gold cone).